The chain runs to 93 residues: Antitoxin EndoAI (93 aa).

Belongs to the MazE/EndoAI family. As to quaternary structure, homodimer, forms a heterohexamer composed of alternating toxin and antitoxin homodimers which inhibits the toxin's endoribonuclease activity. Antitoxin prevents RNA binding to the endoribonuclease.

In terms of biological role, antitoxin component of a type II toxin-antitoxin (TA) system. Antitoxin that directly inhibits activity of EndoA in vitro. Upon expression in E.coli counteracts inhibitory effect of endoribonuclease EndoA. The EndoA-EndoAI complex does not seem to bind its own promoter. The chain is Antitoxin EndoAI from Bacillus subtilis (strain 168).